A 281-amino-acid polypeptide reads, in one-letter code: NADH-cytochrome b5 reductase 1 (281 aa).

Residues 2–22 (VPGKFIFTATFVLLCTIIAVV) form a helical membrane-spanning segment. The 105-residue stretch at 37–141 (EKLQEFPLVA…RGPKGFYHYQ (105 aa)) folds into the FAD-binding FR-type domain. Residues 121–136 (AQLN…GPKG) and 147–179 (EIGM…KVSL) each bind FAD.

It belongs to the flavoprotein pyridine nucleotide cytochrome reductase family. As to quaternary structure, monomer. Component of the 2-(3-amino-3-carboxypropyl)histidine synthase complex composed of DPH1, DPH2, DPH3 and a NADH-dependent reductase, predominantly CBR1. Requires FAD as cofactor.

It is found in the mitochondrion outer membrane. It carries out the reaction 2 Fe(III)-[cytochrome b5] + NADH = 2 Fe(II)-[cytochrome b5] + NAD(+) + H(+). The enzyme catalyses 2 Fe(3+)-[Dph3] + NADH = 2 Fe(2+)-[Dph3] + NAD(+) + H(+). It participates in protein modification; peptidyl-diphthamide biosynthesis. Functionally, NADH-dependent reductase for DPH3 and cytochrome b5. Required for the first step of diphthamide biosynthesis, a post-translational modification of histidine which occurs in elongation factor 2. DPH1 and DPH2 transfer a 3-amino-3-carboxypropyl (ACP) group from S-adenosyl-L-methionine (SAM) to a histidine residue, the reaction is assisted by a reduction system comprising DPH3 and a NADH-dependent reductase, predominantly CBR1. By reducing DPH3, also involved in the formation of the tRNA wobble base modification mcm5s 2U (5-methoxycarbonylmethyl-2-thiouridine), mediated by the elongator complex. The cytochrome b5/NADH cytochrome b5 reductase electron transfer system supports the catalytic activity of several sterol biosynthetic enzymes. This is NADH-cytochrome b5 reductase 1 (CBR1) from Kluyveromyces lactis (strain ATCC 8585 / CBS 2359 / DSM 70799 / NBRC 1267 / NRRL Y-1140 / WM37) (Yeast).